A 380-amino-acid chain; its full sequence is MEEGGDFDNYYGADNQSECEYTDWKSSGALIPAIYMLVFLLGTTGNGLVLWTVFRSSREKRRSADIFIASLAVADLTFVVTLPLWATYTYRDYDWPFGTFFCKLSSYLIFVNMYASVFCLTGLSFDRYLAIVRPVANARLRLRVSGAVATAVLWVLAALLAMPVMVLRTTGDLENTTKVQCYMDYSMVATVSSEWAWEVGLGVSSTTVGFVVPFTIMLTCYFFIAQTIAGHFRKERIEGLRKRRRLLSIIVVLVVTFALCWMPYHLVKTLYMLGSLLHWPCDFDLFLMNIFPYCTCISYVNSCLNPFLYAFFDPRFRQACTSMLCCGQSRCAGTSHSSSGEKSASYSSGHSQGPGPNMGKGGEQMHEKSIPYSQETLVVD.

Residues 1–30 (MEEGGDFDNYYGADNQSECEYTDWKSSGAL) lie on the Extracellular side of the membrane. Asn-15 is a glycosylation site (N-linked (GlcNAc...) asparagine). 2 disulfide bridges follow: Cys-19-Cys-281 and Cys-102-Cys-181. Residues 31–54 (IPAIYMLVFLLGTTGNGLVLWTVF) traverse the membrane as a helical segment. The Cytoplasmic portion of the chain corresponds to 55–64 (RSSREKRRSA). The chain crosses the membrane as a helical span at residues 65-86 (DIFIASLAVADLTFVVTLPLWA). The Extracellular segment spans residues 87 to 99 (TYTYRDYDWPFGT). The chain crosses the membrane as a helical span at residues 100–125 (FFCKLSSYLIFVNMYASVFCLTGLSF). Residues 126–146 (DRYLAIVRPVANARLRLRVSG) are Cytoplasmic-facing. The chain crosses the membrane as a helical span at residues 147–164 (AVATAVLWVLAALLAMPV). Over 165–198 (MVLRTTGDLENTTKVQCYMDYSMVATVSSEWAWE) the chain is Extracellular. An N-linked (GlcNAc...) asparagine glycan is attached at Asn-175. A helical membrane pass occupies residues 199–223 (VGLGVSSTTVGFVVPFTIMLTCYFF). At 224-246 (IAQTIAGHFRKERIEGLRKRRRL) the chain is on the cytoplasmic side. The helical transmembrane segment at 247–270 (LSIIVVLVVTFALCWMPYHLVKTL) threads the bilayer. Over 271–289 (YMLGSLLHWPCDFDLFLMN) the chain is Extracellular. The helical transmembrane segment at 290–312 (IFPYCTCISYVNSCLNPFLYAFF) threads the bilayer. The Cytoplasmic segment spans residues 313–380 (DPRFRQACTS…PYSQETLVVD (68 aa)). A compositionally biased stretch (low complexity) spans 342 to 351 (KSASYSSGHS). Residues 342-380 (KSASYSSGHSQGPGPNMGKGGEQMHEKSIPYSQETLVVD) are disordered. A compositionally biased stretch (polar residues) spans 371-380 (PYSQETLVVD).

It belongs to the G-protein coupled receptor 1 family. In terms of assembly, homodimer; dimerization inhibits APLNR-mediated G protein and beta-arrestin signaling pathways compared to monomeric APLNR. Expressed in heart, brain, kidney, stomach, spleen, thymus, lung, ovary, small intestine and colon, adipose tissues and pancreas. Expressed in glial cells, astrocytes and neuronal subpopulations. Expressed in embryonic (ESCs) and induced (iPSCs) pluripotent stem cells.

Its subcellular location is the cell membrane. In terms of biological role, g protein-coupled receptor for peptide hormones apelin (APLN) and apelin receptor early endogenous ligand (APELA/ELA), that plays a role in the regulation of normal cardiovascular function and fluid homeostasis. When acting as apelin receptor, activates both G(i) protein pathway that inhibits adenylate cyclase activity, and the beta-arrestin pathway that promotes internalization of the receptor. APLNR/APJ also functions as mechanoreceptor that is activated by pathological stimuli in a G-protein-independent fashion to induce beta-arrestin signaling, hence eliciting cardiac hypertrophy. However, the presence of apelin ligand blunts cardiac hypertrophic induction from APLNR/APJ on response to pathological stimuli. Plays a key role in early development such as gastrulation, blood vessels formation and heart morphogenesis by acting as a APELA receptor. May promote angioblast migration toward the embryonic midline, i.e. the position of the future vessel formation, during vasculogenesis. Promotes sinus venosus (SV)-derived endothelial cells migration into the developing heart to promote coronary blood vessel development. Also plays a role in various processes in adults such as regulation of blood vessel formation, blood pressure, heart contractility and heart failure. Functionally, (Microbial infection) Alternative coreceptor with CD4 for HIV-1 infection; may be involved in the development of AIDS dementia. In Homo sapiens (Human), this protein is Apelin receptor.